The following is a 240-amino-acid chain: Probable transcriptional regulatory protein jhp_0149 (240 aa).

It belongs to the TACO1 family.

The protein resides in the cytoplasm. This chain is Probable transcriptional regulatory protein jhp_0149, found in Helicobacter pylori (strain J99 / ATCC 700824) (Campylobacter pylori J99).